A 428-amino-acid polypeptide reads, in one-letter code: Tryptophan synthase beta chain (428 aa).

K92 carries the post-translational modification N6-(pyridoxal phosphate)lysine.

The protein belongs to the TrpB family. As to quaternary structure, tetramer of two alpha and two beta chains. It depends on pyridoxal 5'-phosphate as a cofactor.

It catalyses the reaction (1S,2R)-1-C-(indol-3-yl)glycerol 3-phosphate + L-serine = D-glyceraldehyde 3-phosphate + L-tryptophan + H2O. It participates in amino-acid biosynthesis; L-tryptophan biosynthesis; L-tryptophan from chorismate: step 5/5. Its function is as follows. The beta subunit is responsible for the synthesis of L-tryptophan from indole and L-serine. The chain is Tryptophan synthase beta chain from Leptothrix cholodnii (strain ATCC 51168 / LMG 8142 / SP-6) (Leptothrix discophora (strain SP-6)).